Here is a 492-residue protein sequence, read N- to C-terminus: Zn(2)-C6 fungal-type transcription factor (492 aa).

Residues 14 to 41 (CRRCKNRKIKCDEVHPRCGNCAKHGVPC) constitute a DNA-binding region (zn(2)-C6 fungal-type). The interval 58–119 (TSTESVGAPT…QPSISSSTNT (62 aa)) is disordered. Low complexity predominate over residues 78–95 (SAPRTPLTRPRAPSSPAR). Phosphothreonine is present on T82. A phosphoserine mark is found at S92 and S102. Residues 107–119 (VYSQPSISSSTNT) are compositionally biased toward polar residues. T217 carries the phosphothreonine modification. Residue S305 is modified to Phosphoserine.

As to quaternary structure, interacts with HOG1. Phosphorylation at Thr-82, Ser-92, Ser-102, thr-117 and ser-305 by HOG1 is required for regulating expression of ergosterol biosynthesis genes.

It is found in the nucleus. In terms of biological role, transcription factor that targets gene promoters containing 2 conserved CGAA repeat sequences. Positively regulates the expression of ergosterol biosynthesis genes including CYP51A and CYP51B encoding the sterol 14-alpha demethylase, and ERG6A and ERG6B encoding the sterol 24-C-methyltransferase. This Gibberella zeae (strain ATCC MYA-4620 / CBS 123657 / FGSC 9075 / NRRL 31084 / PH-1) (Wheat head blight fungus) protein is Zn(2)-C6 fungal-type transcription factor.